The primary structure comprises 767 residues: RNA cytosine C(5)-methyltransferase NSUN2 (767 aa).

Residues 1-36 (MGRRSRGRRLQQQQRPEDAEDGAEGGGKRGEAGWEG) form a disordered region. Lys-46 participates in a covalent cross-link: Glycyl lysine isopeptide (Lys-Gly) (interchain with G-Cter in SUMO2). At Ser-139 the chain carries Phosphoserine; by AURKB. S-adenosyl-L-methionine is bound by residues 184 to 190 (CAAPGSK), Asp-215, Asp-242, and Asp-268. The Nucleophile role is filled by Cys-321. Residues 436 to 481 (NKRQPKLQGKSAETRESTQLSPADLTEGKPTDPSKLESPSFTGTGD) form a disordered region. Ser-456 is modified (phosphoserine). Over residues 461–470 (TEGKPTDPSK) the composition is skewed to basic and acidic residues. Glycyl lysine isopeptide (Lys-Gly) (interchain with G-Cter in SUMO2) cross-links involve residues Lys-464 and Lys-470. At Ser-473 the chain carries Phosphoserine. Residues Lys-511 and Lys-516 each participate in a glycyl lysine isopeptide (Lys-Gly) (interchain with G-Cter in SUMO2) cross-link. Position 586 is an N6-acetyllysine; alternate (Lys-586). Lys-586 carries the post-translational modification N6-malonyllysine; alternate. Lys-586 participates in a covalent cross-link: Glycyl lysine isopeptide (Lys-Gly) (interchain with G-Cter in SUMO2); alternate. Residue Ser-593 is modified to Phosphoserine. Glycyl lysine isopeptide (Lys-Gly) (interchain with G-Cter in SUMO2) cross-links involve residues Lys-640, Lys-654, and Lys-660. Thr-718 carries the post-translational modification Phosphothreonine. The segment covering 719–730 (NESAASTGQPDN) has biased composition (polar residues). The disordered stretch occupies residues 719-767 (NESAASTGQPDNDVTEGQRAGEPNSPDAEEANSPDVTAGCDPAGVHPPR). Residues Ser-724, Ser-743, and Ser-751 each carry the phosphoserine modification.

This sequence belongs to the class I-like SAM-binding methyltransferase superfamily. RsmB/NOP family. TRM4 subfamily. Interacts with NPM1 and NCL during interphase; interaction is disrupted following phosphorylation at Ser-139. Phosphorylated at Ser-139 by AURKB during mitosis, leading to abolish methyltransferase activity and the interaction with NPM1. Expressed in adult and fetal brain and in lymphoblastoid cells.

The protein localises to the nucleus. The protein resides in the nucleolus. Its subcellular location is the cytoplasm. It is found in the mitochondrion. It localises to the cytoskeleton. The protein localises to the spindle. The protein resides in the secreted. Its subcellular location is the extracellular exosome. The catalysed reaction is cytidine(48) in tRNA + S-adenosyl-L-methionine = 5-methylcytidine(48) in tRNA + S-adenosyl-L-homocysteine + H(+). The enzyme catalyses cytidine(49) in tRNA + S-adenosyl-L-methionine = 5-methylcytidine(49) in tRNA + S-adenosyl-L-homocysteine + H(+). It catalyses the reaction cytidine(50) in tRNA + S-adenosyl-L-methionine = 5-methylcytidine(50) in tRNA + S-adenosyl-L-homocysteine + H(+). It carries out the reaction cytidine(34) in tRNA precursor + S-adenosyl-L-methionine = 5-methylcytidine(34) in tRNA precursor + S-adenosyl-L-homocysteine + H(+). The catalysed reaction is a cytidine in mRNA + S-adenosyl-L-methionine = a 5-methylcytidine in mRNA + S-adenosyl-L-homocysteine + H(+). Its activity is regulated as follows. Inhibited by magnesium ions. Its function is as follows. RNA cytosine C(5)-methyltransferase that methylates cytosine to 5-methylcytosine (m5C) in various RNAs, such as tRNAs, mRNAs and some long non-coding RNAs (lncRNAs). Involved in various processes, such as epidermal stem cell differentiation, testis differentiation and maternal to zygotic transition during early development: acts by increasing protein synthesis; cytosine C(5)-methylation promoting tRNA stability and preventing mRNA decay. Methylates cytosine to 5-methylcytosine (m5C) at positions 34 and 48 of intron-containing tRNA(Leu)(CAA) precursors, and at positions 48, 49 and 50 of tRNA(Gly)(GCC) precursors. tRNA methylation is required generation of RNA fragments derived from tRNAs (tRFs). Also mediates C(5)-methylation of mitochondrial tRNAs. Catalyzes cytosine C(5)-methylation of mRNAs, leading to stabilize them and prevent mRNA decay: mRNA stabilization involves YBX1 that specifically recognizes and binds m5C-modified transcripts. Cytosine C(5)-methylation of mRNAs also regulates mRNA export: methylated transcripts are specifically recognized by THOC4/ALYREF, which mediates mRNA nucleo-cytoplasmic shuttling. Also mediates cytosine C(5)-methylation of non-coding RNAs, such as vault RNAs (vtRNAs), promoting their processing into regulatory small RNAs. Cytosine C(5)-methylation of vtRNA VTRNA1.1 promotes its processing into small-vault RNA4 (svRNA4) and regulates epidermal differentiation. May act downstream of Myc to regulate epidermal cell growth and proliferation. Required for proper spindle assembly and chromosome segregation, independently of its methyltransferase activity. The protein is RNA cytosine C(5)-methyltransferase NSUN2 of Homo sapiens (Human).